A 309-amino-acid polypeptide reads, in one-letter code: tRNA dimethylallyltransferase (309 aa).

An ATP-binding site is contributed by Gly-9–Thr-16. Substrate is bound at residue Thr-11–Thr-16. Interaction with substrate tRNA regions lie at residues Asp-34–Gln-37 and Gln-164–Arg-168.

The protein belongs to the IPP transferase family. In terms of assembly, monomer. Requires Mg(2+) as cofactor.

It catalyses the reaction adenosine(37) in tRNA + dimethylallyl diphosphate = N(6)-dimethylallyladenosine(37) in tRNA + diphosphate. Catalyzes the transfer of a dimethylallyl group onto the adenine at position 37 in tRNAs that read codons beginning with uridine, leading to the formation of N6-(dimethylallyl)adenosine (i(6)A). In Flavobacterium johnsoniae (strain ATCC 17061 / DSM 2064 / JCM 8514 / BCRC 14874 / CCUG 350202 / NBRC 14942 / NCIMB 11054 / UW101) (Cytophaga johnsonae), this protein is tRNA dimethylallyltransferase.